Reading from the N-terminus, the 274-residue chain is MEKYVVMGNPIEHSQSPFIHQLFSKQSGIDYEYGRLLVPLGEFDKVATQFFSQGGRGANVTVPFKEDAFRFVDKLTQRAQACGAVNTILKLDDGTLLGDNTDGQGLILDLARLDFIIPGKILSVLVIGAGGATRGILLPLLNYNCDITLTNRTVEKAQQLAQEFSQFGTIRASAPQNVTDKHYDLIINASSSSMTDDIPPIPDSAYGFKTACYDLYYKAGMTSFLYHALKNGSTRLSDGLGMLVGQAAYAVELWYERVPDINPTINILRENLNK.

Shikimate is bound by residues 14–16 (SQS) and threonine 61. Lysine 65 acts as the Proton acceptor in catalysis. 2 residues coordinate shikimate: asparagine 86 and aspartate 102. NADP(+) contacts are provided by residues 128–132 (GAGGA), 151–156 (NRTVEK), and leucine 215. Tyrosine 217 lines the shikimate pocket. An NADP(+)-binding site is contributed by glycine 239.

The protein belongs to the shikimate dehydrogenase family. Homodimer.

It catalyses the reaction shikimate + NADP(+) = 3-dehydroshikimate + NADPH + H(+). It functions in the pathway metabolic intermediate biosynthesis; chorismate biosynthesis; chorismate from D-erythrose 4-phosphate and phosphoenolpyruvate: step 4/7. Its function is as follows. Involved in the biosynthesis of the chorismate, which leads to the biosynthesis of aromatic amino acids. Catalyzes the reversible NADPH linked reduction of 3-dehydroshikimate (DHSA) to yield shikimate (SA). The protein is Shikimate dehydrogenase (NADP(+)) of Proteus mirabilis (strain HI4320).